We begin with the raw amino-acid sequence, 182 residues long: Putative pre-16S rRNA nuclease (182 aa).

The protein belongs to the YqgF nuclease family.

The protein localises to the cytoplasm. Functionally, could be a nuclease involved in processing of the 5'-end of pre-16S rRNA. In Corynebacterium glutamicum (strain ATCC 13032 / DSM 20300 / JCM 1318 / BCRC 11384 / CCUG 27702 / LMG 3730 / NBRC 12168 / NCIMB 10025 / NRRL B-2784 / 534), this protein is Putative pre-16S rRNA nuclease.